The sequence spans 142 residues: MCHAAPAAPAGGRDAPRGGGEFSGAVRSRAVGANFEQRARQFLERRGLAFVAANVTIRGGELDLVMRASDGMLVFVEVRARRSARHGGAAASVGWRKRRRVIAAALDFWARHGAGAACRFDVVAFEAGRLDWLRDAFRADDA.

It belongs to the UPF0102 family.

This is UPF0102 protein Bcep1808_0248 from Burkholderia vietnamiensis (strain G4 / LMG 22486) (Burkholderia cepacia (strain R1808)).